An 88-amino-acid chain; its full sequence is MKPVFVILFLTCIAFTYAESYEDVKEEIKNEVEREIFEDLEEESDVLDSNVREFNDAKPWRFRRAIQRVRWRKVAPYMPFVVKTVGKK.

The N-terminal stretch at 1–18 (MKPVFVILFLTCIAFTYA) is a signal peptide. Residues 19-57 (ESYEDVKEEIKNEVEREIFEDLEEESDVLDSNVREFNDA) constitute a propeptide that is removed on maturation. Residue Val85 is modified to Valine amide.

It belongs to the arminin family. As to expression, expressed in entodermal epithelium along the body column.

The protein resides in the secreted. Its subcellular location is the target cell membrane. Functionally, antimicrobial peptide with a broad-spectrum antimicrobial activity. Keeps its antibacterial activity under a wide range of salt concentrations that mimic physiological conditions of human blood, which is surprising, since Hydra is an obligate freshwater animal with nearly no salt tolerance. Does not affect red blood cells. This Hydra vulgaris (Hydra) protein is Arminin 1c.